Reading from the N-terminus, the 464-residue chain is Anthranilate synthase component 1 (464 aa).

L-tryptophan is bound by residues serine 41 and 236 to 238 (PYM). 271–272 (GT) is a binding site for chorismate. Glutamate 298 contributes to the Mg(2+) binding site. Residues tyrosine 386, arginine 406, 420–422 (GAG), and glycine 422 contribute to the chorismate site. Glutamate 435 is a binding site for Mg(2+).

The protein belongs to the anthranilate synthase component I family. As to quaternary structure, heterotetramer consisting of two non-identical subunits: a beta subunit (TrpG) and a large alpha subunit (TrpE). The cofactor is Mg(2+).

It catalyses the reaction chorismate + L-glutamine = anthranilate + pyruvate + L-glutamate + H(+). It functions in the pathway amino-acid biosynthesis; L-tryptophan biosynthesis; L-tryptophan from chorismate: step 1/5. Its activity is regulated as follows. Feedback inhibited by tryptophan. Functionally, part of a heterotetrameric complex that catalyzes the two-step biosynthesis of anthranilate, an intermediate in the biosynthesis of L-tryptophan. In the first step, the glutamine-binding beta subunit (TrpG) of anthranilate synthase (AS) provides the glutamine amidotransferase activity which generates ammonia as a substrate that, along with chorismate, is used in the second step, catalyzed by the large alpha subunit of AS (TrpE) to produce anthranilate. In the absence of TrpG, TrpE can synthesize anthranilate directly from chorismate and high concentrations of ammonia. This is Anthranilate synthase component 1 (trpE) from Methanothermobacter thermautotrophicus (strain ATCC 29096 / DSM 1053 / JCM 10044 / NBRC 100330 / Delta H) (Methanobacterium thermoautotrophicum).